Here is a 1325-residue protein sequence, read N- to C-terminus: Nephrocystin-3 (1325 aa).

Residues 1–20 are disordered; the sequence is MGTASSLVSPTGGEVIEDTY. Residue Gly2 is the site of N-myristoyl glycine attachment. Residues 107 to 203 are a coiled coil; sequence SMGRREAKLD…QRLQAQGIQV (97 aa). TPR repeat units lie at residues 467 to 500, 881 to 914, 916 to 937, 938 to 971, 980 to 1013, 1022 to 1055, 1088 to 1121, 1130 to 1163, 1172 to 1205, 1214 to 1247, and 1256 to 1289; these read TPEE…AHEL, CLLN…KGAM, TEYF…MLCL, ADLY…RETA, AQSL…SENA, AREL…RQQA, ARTL…RERV, AQSL…RRRA, AYTV…RQKS, ATAL…YEDS, and GETL…KEAE. A disordered region spans residues 1293–1325; that stretch reads LGGKAPSRQSSSGDTFLFKTTHSPNVFLPQGQS. Positions 1299–1325 are enriched in polar residues; the sequence is SRQSSSGDTFLFKTTHSPNVFLPQGQS.

Interacts with NPHP1 and INVS/NPHP2. Interacts (when myristoylated) with UNC119 and UNC119B; interaction is required for localization to cilium. Interacts with CEP164. Component of a complex containing at least ANKS6, INVS, NEK8 and NPHP3. ANKS6 may organize complex assembly by linking INVS and NPHP3 to NEK8 and INVS may target the complex to the proximal ciliary axoneme.

Its subcellular location is the cell projection. It is found in the cilium. Functionally, required for normal ciliary development and function. Inhibits disheveled-1-induced canonical Wnt-signaling activity and may also play a role in the control of non-canonical Wnt signaling that regulates planar cell polarity. Probably acts as a molecular switch between different Wnt signaling pathways. Required for proper convergent extension cell movements. The protein is Nephrocystin-3 (Nphp3) of Mus musculus (Mouse).